A 242-amino-acid chain; its full sequence is 1-(5-phosphoribosyl)-5-[(5-phosphoribosylamino)methylideneamino] imidazole-4-carboxamide isomerase (242 aa).

D10 acts as the Proton acceptor in catalysis. The active-site Proton donor is D131.

The protein belongs to the HisA/HisF family.

The protein localises to the cytoplasm. It catalyses the reaction 1-(5-phospho-beta-D-ribosyl)-5-[(5-phospho-beta-D-ribosylamino)methylideneamino]imidazole-4-carboxamide = 5-[(5-phospho-1-deoxy-D-ribulos-1-ylimino)methylamino]-1-(5-phospho-beta-D-ribosyl)imidazole-4-carboxamide. It functions in the pathway amino-acid biosynthesis; L-histidine biosynthesis; L-histidine from 5-phospho-alpha-D-ribose 1-diphosphate: step 4/9. In Bifidobacterium animalis subsp. lactis (strain AD011), this protein is 1-(5-phosphoribosyl)-5-[(5-phosphoribosylamino)methylideneamino] imidazole-4-carboxamide isomerase.